Reading from the N-terminus, the 376-residue chain is Endo-1,4-beta-xylanase A (376 aa).

A signal peptide spans Met-1–Ala-18. A GH10 domain is found at Gln-55–Ala-355. Asn-100 carries an N-linked (GlcNAc...) asparagine glycan. Glu-170 (proton donor) is an active-site residue. The active-site Nucleophile is Glu-277. A glycan (N-linked (GlcNAc...) asparagine) is linked at Asn-358.

This sequence belongs to the glycosyl hydrolase 10 (cellulase F) family.

It localises to the secreted. The enzyme catalyses Endohydrolysis of (1-&gt;4)-beta-D-xylosidic linkages in xylans.. The protein operates within glycan degradation; xylan degradation. Partial inhibition of activity is detected in the presence of Ag(+), Cu2(+) and SDS. Like most fungal xylanases, activity is completely inhibited by Hg(2+) since Hg(2+) could interact with tryptophan residues and oxidize the indole ring. Beta-mercaptoethanol enhances the enzymatic activity by counteracting the oxidation effects of the S-S linkage between cysteine residues. Functionally, endo-1,4-beta-xylanase involved in the hydrolysis of xylan, a major structural heterogeneous polysaccharide found in plant biomass representing the second most abundant polysaccharide in the biosphere, after cellulose. Is most active on birchwood xylan (defined as 100%), moderate on beechwood xylan (96.8%) and soluble wheat arabinoxylan (84.5%), and weak on insoluble wheat arabinoxylan (19.7%). Hydrolyzes substrates into a mixture of xylobiose and xylotriose, but no xylose. No activity was detected in the presence of barley beta-glucan, carboxymethyl cellulose-sodium (CMC-Na), and Avicel. Acts as an alkali-tolerant xylanase, exhibiting 68.8% of the activity at pH 9.0, and even 31.8% at pH 10.0. In Humicola insolens (Soft-rot fungus), this protein is Endo-1,4-beta-xylanase A.